The chain runs to 330 residues: Polyprenol dehydrogenase (330 aa).

Residues Ile55, Tyr208, Lys212, and Thr245 each contribute to the NAD(+) site. The Proton acceptor role is filled by Tyr208.

This sequence belongs to the short-chain dehydrogenases/reductases (SDR) family. As to expression, widely expressed. Highly expressed in the pancreas.

The protein resides in the lipid droplet. The protein localises to the secreted. It carries out the reaction a di-trans,poly-cis-polyprenol + NAD(+) = a di-trans,poly-cis-polyprenal + NADH + H(+). The catalysed reaction is a di-trans,poly-cis-polyprenol + NADP(+) = a di-trans,poly-cis-polyprenal + NADPH + H(+). The enzyme catalyses a di-trans,poly-cis-dolichol + NADP(+) = a di-trans,poly-cis-dolichal + NADPH + H(+). It catalyses the reaction a di-trans,poly-cis-dolichol + NAD(+) = a di-trans,poly-cis-dolichal + NADH + H(+). Its pathway is protein modification; protein glycosylation. In terms of biological role, oxidoreductase that plays a key role in early steps of protein N-linked glycosylation by mediating two non-consecutive steps in dolichol biosynthesis. Acts both as a NAD(+)-dependent dehydrogenase and as a NADPH-dependent reductase during the conversion of polyprenol into dolichol. First catalyzes the NAD(+)-dependent dehydrogenation of polyprenol into polyprenal; polyprenal is then reduced into dolichal by SRD5A3. It then catalyzes the NADPH-dependent reduction of dolichal into dolichol. May also acts as a positive regulator of starvation-induced autophagy. The sequence is that of Polyprenol dehydrogenase from Homo sapiens (Human).